The primary structure comprises 286 residues: Putative 2-aminoethylphosphonate transport system permease protein PhnU (286 aa).

6 consecutive transmembrane segments (helical) span residues 19-39 (WLLL…SLIV), 76-96 (FFAT…LVFI), 111-131 (FIAL…GSAG), 150-170 (FLYS…PLVM), 202-222 (VIFP…LLLT), and 254-274 (YTVA…LFSL). An ABC transmembrane type-1 domain is found at 68–275 (LLNTLQIAFF…VLSLGLFSLY (208 aa)).

This sequence belongs to the binding-protein-dependent transport system permease family.

Its subcellular location is the cell inner membrane. Its function is as follows. Probably part of the PhnSTUV complex (TC 3.A.1.11.5) involved in 2-aminoethylphosphonate import. Probably responsible for the translocation of the substrate across the membrane. This Salmonella choleraesuis (strain SC-B67) protein is Putative 2-aminoethylphosphonate transport system permease protein PhnU (phnU).